A 109-amino-acid chain; its full sequence is MAAGVVFLALSAQLLQARLMKEESPVVSWRLEPEDGTALDVHFVSTLEPLSNAVKRNVPRCIIILVLQEPTPFRISVTSSCFVQNTLTKLLKDRRKMQTVQCATAQETS.

An N-terminal signal peptide occupies residues 1-17 (MAAGVVFLALSAQLLQA).

Belongs to the BAGE family. As to expression, not expressed in normal tissues except in testis. Expressed in melanoma, bladder and lung carcinomas.

Its subcellular location is the secreted. Functionally, unknown. Candidate gene encoding tumor antigens. This chain is B melanoma antigen 3 (BAGE3), found in Homo sapiens (Human).